The primary structure comprises 104 residues: UPF0145 protein VNG_2432C (104 aa).

Belongs to the UPF0145 family.

The sequence is that of UPF0145 protein VNG_2432C from Halobacterium salinarum (strain ATCC 700922 / JCM 11081 / NRC-1) (Halobacterium halobium).